Reading from the N-terminus, the 637-residue chain is Transcription termination factor FttA (637 aa).

The KHa stretch occupies residues 4–71 (EDVLLDLKHK…IAMRPDPRVL (68 aa)). Residues 72–139 (ATPEDSISII…WIPKVVRTPP (68 aa)) form a KHb region. Residues 180–383 (WVRVTALGGC…VISEATYGNA (204 aa)) are metallo-beta-lactamase N-terminus. Positions 242, 244, 246, 247, 329, and 352 each coordinate Zn(2+). The interval 384-578 (NAFQPALKDA…MEVQVVDGFS (195 aa)) is beta-Casp. A metallo-beta-lactamase C-terminus region spans residues 579–637 (GHSDRRQLMEYVKRMQPRPERVFTEHGDEKACVDLASSVYKKLKIETRALTNLETVRLL). Histidine 604 is a binding site for Zn(2+).

The protein belongs to the metallo-beta-lactamase superfamily. RNA-metabolizing metallo-beta-lactamase-like family. FttA subfamily. Homodimer. Interacts with RNA polymerase (RNAP), interacts with the Spt4-Spt5 complex. Zn(2+) serves as cofactor.

Functionally, terminates transcription on the whole genome. Termination is linked to FttA-mediated RNA cleavage and does not require NTP hydrolysis. Cleaves endonucleolytically at the RNA exit channel of RNA polymerase (RNAP); the 5'-3' exonuclease activity of this protein degrades the nascent RNA released from RNAP. The polypeptide is Transcription termination factor FttA (Methanosarcina mazei (strain ATCC BAA-159 / DSM 3647 / Goe1 / Go1 / JCM 11833 / OCM 88) (Methanosarcina frisia)).